The chain runs to 207 residues: ATP-dependent Clp protease proteolytic subunit (207 aa).

S111 serves as the catalytic Nucleophile. Residue H136 is part of the active site.

The protein belongs to the peptidase S14 family. As to quaternary structure, fourteen ClpP subunits assemble into 2 heptameric rings which stack back to back to give a disk-like structure with a central cavity, resembling the structure of eukaryotic proteasomes.

The protein localises to the cytoplasm. The enzyme catalyses Hydrolysis of proteins to small peptides in the presence of ATP and magnesium. alpha-casein is the usual test substrate. In the absence of ATP, only oligopeptides shorter than five residues are hydrolyzed (such as succinyl-Leu-Tyr-|-NHMec, and Leu-Tyr-Leu-|-Tyr-Trp, in which cleavage of the -Tyr-|-Leu- and -Tyr-|-Trp bonds also occurs).. Functionally, cleaves peptides in various proteins in a process that requires ATP hydrolysis. Has a chymotrypsin-like activity. Plays a major role in the degradation of misfolded proteins. In Psychromonas ingrahamii (strain DSM 17664 / CCUG 51855 / 37), this protein is ATP-dependent Clp protease proteolytic subunit.